A 394-amino-acid polypeptide reads, in one-letter code: DNA primase large subunit PriL (394 aa).

[4Fe-4S] cluster-binding residues include cysteine 231, cysteine 340, cysteine 351, and cysteine 357.

This sequence belongs to the eukaryotic-type primase large subunit family. In terms of assembly, heterodimer of a small subunit (PriS) and a large subunit (PriL). The cofactor is [4Fe-4S] cluster.

Functionally, regulatory subunit of DNA primase, an RNA polymerase that catalyzes the synthesis of short RNA molecules used as primers for DNA polymerase during DNA replication. Stabilizes and modulates the activity of the small subunit, increasing the rate of DNA synthesis, and conferring RNA synthesis capability. The DNA polymerase activity may enable DNA primase to also catalyze primer extension after primer synthesis. May also play a role in DNA repair. This chain is DNA primase large subunit PriL, found in Pyrococcus horikoshii (strain ATCC 700860 / DSM 12428 / JCM 9974 / NBRC 100139 / OT-3).